A 239-amino-acid chain; its full sequence is Large ribosomal subunit protein uL2 (239 aa).

The protein belongs to the universal ribosomal protein uL2 family.

The protein resides in the cytoplasm. The protein is Large ribosomal subunit protein uL2 (RPL8) of Encephalitozoon cuniculi (strain GB-M1) (Microsporidian parasite).